The chain runs to 163 residues: Cyanate hydratase (163 aa).

Catalysis depends on residues arginine 103, glutamate 106, and serine 129.

Belongs to the cyanase family.

The enzyme catalyses cyanate + hydrogencarbonate + 3 H(+) = NH4(+) + 2 CO2. Its function is as follows. Catalyzes the reaction of cyanate with bicarbonate to produce ammonia and carbon dioxide. This is Cyanate hydratase from Ajellomyces capsulatus (strain G186AR / H82 / ATCC MYA-2454 / RMSCC 2432) (Darling's disease fungus).